Reading from the N-terminus, the 279-residue chain is 2-dehydropantoate 2-reductase (279 aa).

Residues 6-11, lysine 66, and asparagine 86 each bind NADP(+); that span reads GLGAVG. Residue lysine 158 is the Proton donor of the active site. Substrate is bound by residues lysine 158, asparagine 162, asparagine 166, asparagine 176, and 225–228; that span reads NLSS. Glutamate 240 contributes to the NADP(+) binding site.

This sequence belongs to the ketopantoate reductase family.

The protein localises to the cytoplasm. The catalysed reaction is (R)-pantoate + NAD(+) = 2-dehydropantoate + NADH + H(+). The enzyme catalyses (R)-pantoate + NADP(+) = 2-dehydropantoate + NADPH + H(+). It participates in cofactor biosynthesis; coenzyme A biosynthesis. Its function is as follows. Catalyzes the NAD(P)H-dependent reduction of ketopantoate into pantoic acid. In Pyrobaculum aerophilum (strain ATCC 51768 / DSM 7523 / JCM 9630 / CIP 104966 / NBRC 100827 / IM2), this protein is 2-dehydropantoate 2-reductase.